We begin with the raw amino-acid sequence, 309 residues long: Probable manganese-dependent inorganic pyrophosphatase (309 aa).

The Mn(2+) site is built by His-9, Asp-13, Asp-15, Asp-75, His-97, and Asp-149.

Belongs to the PPase class C family. It depends on Mn(2+) as a cofactor.

It is found in the cytoplasm. It carries out the reaction diphosphate + H2O = 2 phosphate + H(+). This chain is Probable manganese-dependent inorganic pyrophosphatase, found in Bacillus cereus (strain ZK / E33L).